We begin with the raw amino-acid sequence, 299 residues long: Glutamyl-Q tRNA(Asp) synthetase (299 aa).

L-glutamate contacts are provided by residues 9 to 13 (RFAPS) and E45. Residues 12 to 22 (PSPTGPLHFGS) carry the 'HIGH' region motif. Zn(2+) contacts are provided by C101, C103, and C118. Positions 170 and 188 each coordinate L-glutamate. Positions 226 to 230 (KLSKS) match the 'KMSKS' region motif. Residue K229 participates in ATP binding. The interval 279–299 (QLLPRQRQRDRATCAYERQRD) is disordered. The segment covering 285-299 (RQRDRATCAYERQRD) has biased composition (basic and acidic residues).

This sequence belongs to the class-I aminoacyl-tRNA synthetase family. GluQ subfamily. The cofactor is Zn(2+).

Its function is as follows. Catalyzes the tRNA-independent activation of glutamate in presence of ATP and the subsequent transfer of glutamate onto a tRNA(Asp). Glutamate is transferred on the 2-amino-5-(4,5-dihydroxy-2-cyclopenten-1-yl) moiety of the queuosine in the wobble position of the QUC anticodon. The sequence is that of Glutamyl-Q tRNA(Asp) synthetase from Xanthomonas oryzae pv. oryzae (strain KACC10331 / KXO85).